A 147-amino-acid polypeptide reads, in one-letter code: Large ribosomal subunit protein bL9 (147 aa).

Belongs to the bacterial ribosomal protein bL9 family.

Its function is as follows. Binds to the 23S rRNA. This chain is Large ribosomal subunit protein bL9, found in Campylobacter fetus subsp. fetus (strain 82-40).